A 222-amino-acid polypeptide reads, in one-letter code: Large ribosomal subunit protein bL25 (222 aa).

This sequence belongs to the bacterial ribosomal protein bL25 family. CTC subfamily. As to quaternary structure, part of the 50S ribosomal subunit; part of the 5S rRNA/L5/L18/L25 subcomplex. Contacts the 5S rRNA. Binds to the 5S rRNA independently of L5 and L18.

Its function is as follows. This is one of the proteins that binds to the 5S RNA in the ribosome where it forms part of the central protuberance. This Ruthia magnifica subsp. Calyptogena magnifica protein is Large ribosomal subunit protein bL25.